The primary structure comprises 725 residues: Putative coiled-coil domain-containing protein 144B (725 aa).

The segment covering 1–11 (MASWGGEKRGG) has biased composition (basic and acidic residues). Disordered regions lie at residues 1–25 (MASWGGEKRGGAEGSPKLAVYATRK), 87–188 (AARS…NLTE), 213–260 (LPEN…DCDR), 453–485 (NMNQNSDSGSTNNYKSLKPKLENLSSLPPDSDR), and 528–586 (EEEM…KVKN). Composition is skewed to polar residues over residues 129 to 150 (PESLPQNNNPDWHPTNLTLSDE) and 165 to 178 (PSVSPSMPENQSAT). Residues 215-244 (ENKESKEAEQDLELTSEEEQERLKGCENKQ) are a coiled coil. A compositionally biased stretch (acidic residues) spans 224 to 234 (QDLELTSEEEQ). The segment covering 453-467 (NMNQNSDSGSTNNYK) has biased composition (polar residues). The stretch at 490–546 (YLHEELQQDMQKFKNEVNTLEEEFLALKKENVQLHKEVEEEMEKHRSNSTELSGTLT) forms a coiled coil. Positions 528–537 (EEEMEKHRSN) are enriched in basic and acidic residues. A compositionally biased stretch (low complexity) spans 543 to 552 (GTLTDGTTVG). Over residues 563 to 583 (PRKENEEHDRPADKTANEKNK) the composition is skewed to basic and acidic residues. A coiled-coil region spans residues 648 to 713 (LLKLKNNHCD…ALKQENGRKE (66 aa)).

Belongs to the CCDC144 family.

The sequence is that of Putative coiled-coil domain-containing protein 144B from Homo sapiens (Human).